The primary structure comprises 444 residues: ATP-dependent protease ATPase subunit HslU (444 aa).

Residues Ile-20, 62 to 67 (GVGKTE), Asp-257, Glu-322, and Arg-394 each bind ATP.

It belongs to the ClpX chaperone family. HslU subfamily. In terms of assembly, a double ring-shaped homohexamer of HslV is capped on each side by a ring-shaped HslU homohexamer. The assembly of the HslU/HslV complex is dependent on binding of ATP.

Its subcellular location is the cytoplasm. In terms of biological role, ATPase subunit of a proteasome-like degradation complex; this subunit has chaperone activity. The binding of ATP and its subsequent hydrolysis by HslU are essential for unfolding of protein substrates subsequently hydrolyzed by HslV. HslU recognizes the N-terminal part of its protein substrates and unfolds these before they are guided to HslV for hydrolysis. This is ATP-dependent protease ATPase subunit HslU from Bordetella avium (strain 197N).